The following is a 428-amino-acid chain: Glutamate-1-semialdehyde 2,1-aminomutase (428 aa).

At Lys267 the chain carries N6-(pyridoxal phosphate)lysine.

This sequence belongs to the class-III pyridoxal-phosphate-dependent aminotransferase family. HemL subfamily. In terms of assembly, homodimer. Pyridoxal 5'-phosphate is required as a cofactor.

Its subcellular location is the cytoplasm. The enzyme catalyses (S)-4-amino-5-oxopentanoate = 5-aminolevulinate. Its pathway is porphyrin-containing compound metabolism; protoporphyrin-IX biosynthesis; 5-aminolevulinate from L-glutamyl-tRNA(Glu): step 2/2. This is Glutamate-1-semialdehyde 2,1-aminomutase from Pelobacter propionicus (strain DSM 2379 / NBRC 103807 / OttBd1).